The sequence spans 204 residues: Large ribosomal subunit protein uL4 (204 aa).

The segment at 47 to 69 (KAQKTRAEVSGGGKKPWRQKGTG) is disordered.

This sequence belongs to the universal ribosomal protein uL4 family. In terms of assembly, part of the 50S ribosomal subunit.

Functionally, one of the primary rRNA binding proteins, this protein initially binds near the 5'-end of the 23S rRNA. It is important during the early stages of 50S assembly. It makes multiple contacts with different domains of the 23S rRNA in the assembled 50S subunit and ribosome. Its function is as follows. Forms part of the polypeptide exit tunnel. The polypeptide is Large ribosomal subunit protein uL4 (Cellvibrio japonicus (strain Ueda107) (Pseudomonas fluorescens subsp. cellulosa)).